Here is a 222-residue protein sequence, read N- to C-terminus: Eukaryotic translation initiation factor 3 subunit K (222 aa).

Residues 46 to 208 (YDLEANLAVL…KIKTKNITEK (163 aa)) form the PCI domain.

This sequence belongs to the eIF-3 subunit K family. As to quaternary structure, component of the eukaryotic translation initiation factor 3 (eIF-3) complex. The eIF-3 complex interacts with pix.

Its subcellular location is the cytoplasm. In terms of biological role, component of the eukaryotic translation initiation factor 3 (eIF-3) complex, which is involved in protein synthesis of a specialized repertoire of mRNAs and, together with other initiation factors, stimulates binding of mRNA and methionyl-tRNAi to the 40S ribosome. The eIF-3 complex specifically targets and initiates translation of a subset of mRNAs involved in cell proliferation. The polypeptide is Eukaryotic translation initiation factor 3 subunit K (Drosophila sechellia (Fruit fly)).